Here is a 209-residue protein sequence, read N- to C-terminus: ATP phosphoribosyltransferase (209 aa).

The protein belongs to the ATP phosphoribosyltransferase family. Short subfamily. Heteromultimer composed of HisG and HisZ subunits.

It is found in the cytoplasm. It carries out the reaction 1-(5-phospho-beta-D-ribosyl)-ATP + diphosphate = 5-phospho-alpha-D-ribose 1-diphosphate + ATP. It participates in amino-acid biosynthesis; L-histidine biosynthesis; L-histidine from 5-phospho-alpha-D-ribose 1-diphosphate: step 1/9. Its function is as follows. Catalyzes the condensation of ATP and 5-phosphoribose 1-diphosphate to form N'-(5'-phosphoribosyl)-ATP (PR-ATP). Has a crucial role in the pathway because the rate of histidine biosynthesis seems to be controlled primarily by regulation of HisG enzymatic activity. In Sulfurimonas denitrificans (strain ATCC 33889 / DSM 1251) (Thiomicrospira denitrificans (strain ATCC 33889 / DSM 1251)), this protein is ATP phosphoribosyltransferase.